A 347-amino-acid polypeptide reads, in one-letter code: NADH-ubiquinone oxidoreductase chain 2 (347 aa).

10 consecutive transmembrane segments (helical) span residues 3-23 (PPIL…VMLS), 25-45 (HWLL…PILM), 66-86 (ASML…QWVI), 93-115 (IASI…HFWV), 149-169 (INTN…GWGG), 178-198 (IMAY…TYNP), 201-221 (MILN…LFML), 237-257 (FPLI…LPPL), 274-294 (NMII…YFYL), and 325-345 (LLPP…MLSV).

The protein belongs to the complex I subunit 2 family. As to quaternary structure, core subunit of respiratory chain NADH dehydrogenase (Complex I) which is composed of 45 different subunits. Interacts with TMEM242.

It localises to the mitochondrion inner membrane. It catalyses the reaction a ubiquinone + NADH + 5 H(+)(in) = a ubiquinol + NAD(+) + 4 H(+)(out). Its function is as follows. Core subunit of the mitochondrial membrane respiratory chain NADH dehydrogenase (Complex I) which catalyzes electron transfer from NADH through the respiratory chain, using ubiquinone as an electron acceptor. Essential for the catalytic activity and assembly of complex I. In Canis lupus (Gray wolf), this protein is NADH-ubiquinone oxidoreductase chain 2.